The following is a 179-amino-acid chain: Large ribosomal subunit protein uL5 (179 aa).

It belongs to the universal ribosomal protein uL5 family. As to quaternary structure, part of the 50S ribosomal subunit; part of the 5S rRNA/L5/L18/L25 subcomplex. Contacts the 5S rRNA and the P site tRNA. Forms a bridge to the 30S subunit in the 70S ribosome.

In terms of biological role, this is one of the proteins that bind and probably mediate the attachment of the 5S RNA into the large ribosomal subunit, where it forms part of the central protuberance. In the 70S ribosome it contacts protein S13 of the 30S subunit (bridge B1b), connecting the 2 subunits; this bridge is implicated in subunit movement. Contacts the P site tRNA; the 5S rRNA and some of its associated proteins might help stabilize positioning of ribosome-bound tRNAs. The chain is Large ribosomal subunit protein uL5 from Desulfatibacillum aliphaticivorans.